The primary structure comprises 242 residues: UPF0246 protein SPCG_1533 (242 aa).

It belongs to the UPF0246 family.

This is UPF0246 protein SPCG_1533 from Streptococcus pneumoniae (strain CGSP14).